The chain runs to 550 residues: T-complex protein 1 subunit eta (550 aa).

The tract at residues S529–M550 is disordered.

It belongs to the TCP-1 chaperonin family. In terms of assembly, heterooligomeric complex of about 850 to 900 kDa that forms two stacked rings, 12 to 16 nm in diameter.

The protein resides in the cytoplasm. In terms of biological role, molecular chaperone; assists the folding of proteins upon ATP hydrolysis. Known to play a role, in vitro, in the folding of actin and tubulin. In yeast may play a role in mitotic spindle formation. The chain is T-complex protein 1 subunit eta (CCT7) from Saccharomyces cerevisiae (strain ATCC 204508 / S288c) (Baker's yeast).